We begin with the raw amino-acid sequence, 156 residues long: MAVNVSRVIKTLGDDFTVIDASGHILGRLSSKIAKRLLNGERIVVVNAEKAVITGDKYMVFERYKEKYDRGSKEKGPYFPRHPERIFKRTVRGMLPWKSSRGRDAYRRLRVFMGVPEELQGREFEKIEDALLEKVSKTDKYVTLAEVSRYLGFRGV.

This sequence belongs to the universal ribosomal protein uL13 family. In terms of assembly, part of the 50S ribosomal subunit.

Functionally, this protein is one of the early assembly proteins of the 50S ribosomal subunit, although it is not seen to bind rRNA by itself. It is important during the early stages of 50S assembly. This Archaeoglobus fulgidus (strain ATCC 49558 / DSM 4304 / JCM 9628 / NBRC 100126 / VC-16) protein is Large ribosomal subunit protein uL13.